We begin with the raw amino-acid sequence, 57 residues long: Potassium channel toxin alpha-KTx 8.8 (57 aa).

An N-terminal signal peptide occupies residues 1–19 (MCRLYAIILIVLVMNVIMT). A propeptide spanning residues 20-28 (IIPDSKVEV) is cleaved from the precursor. Cystine bridges form between Cys-31–Cys-47, Cys-34–Cys-52, and Cys-38–Cys-54.

It belongs to the short scorpion toxin superfamily. Potassium channel inhibitor family. Alpha-KTx 08 subfamily. In terms of processing, contains 3 disulfide bonds. In terms of tissue distribution, expressed by the venom gland.

It localises to the secreted. In terms of biological role, selectively inhibits voltage-gated potassium channels rKv1.2/KCNA2 (IC(50)=331 nM) and hKv1.3/KCNA3 (IC(50)=503 nM). Partially inihibts rKv1.6/KCNA6 (IC(50)=9983 nM). In Orthochirus scrobiculosus (Central Asian scorpion), this protein is Potassium channel toxin alpha-KTx 8.8.